We begin with the raw amino-acid sequence, 250 residues long: Aquaporin TIP2-3 (250 aa).

Position 1 is an N-acetylmethionine (Met1). The Cytoplasmic segment spans residues 1–24; the sequence is MVKIEVGSVGDSFSVSSLKAYLSE. An N6,N6-dimethyllysine modification is found at Lys3. Residues 25–45 traverse the membrane as a helical segment; it reads FIATLLFVFAGVGSAVAFAKL. Residues 46–54 are Vacuolar-facing; sequence TSDGALDPA. The helical transmembrane segment at 55-75 threads the bilayer; it reads GLVAIAIAHAFALFVGVSIAA. At 76-101 the chain is on the cytoplasmic side; that stretch reads NISGGHLNPAVTLGLAIGGNITLITG. An NPA 1 motif is present at residues 83 to 85; that stretch reads NPA. Residues 102–122 form a helical membrane-spanning segment; sequence FFYWIAQCLGSIVACLLLVFV. The Vacuolar segment spans residues 123–134; sequence TNGKSVPTHGVS. Residues 135-155 form a helical membrane-spanning segment; sequence AGLGAVEGVVMEIVVTFALVY. Topologically, residues 156–168 are cytoplasmic; sequence TVYATAADPKKGS. A helical transmembrane segment spans residues 169–189; that stretch reads LGTIAPIAIGFIVGANILAAG. The Vacuolar portion of the chain corresponds to 190 to 217; that stretch reads PFSGGSMNPARSFGPAVVSGDLSQIWIY. The NPA 2 motif lies at 197-199; sequence NPA. The chain crosses the membrane as a helical span at residues 218–238; sequence WVGPLVGGALAGLIYGDVFIG. The Cytoplasmic portion of the chain corresponds to 239–250; it reads SYEAVETREIRV.

The protein belongs to the MIP/aquaporin (TC 1.A.8) family. TIP (TC 1.A.8.10) subfamily. In terms of assembly, interacts with cucumber mosaic virus (CMV) Protein 1a. As to expression, widely expressed.

The protein resides in the vacuole membrane. Its function is as follows. Transports methylammonium or ammonium in yeast cells, preferentially at high medium pH. May participate in vacuolar compartmentation and detoxification of ammonium. The protein is Aquaporin TIP2-3 (TIP2-3) of Arabidopsis thaliana (Mouse-ear cress).